A 470-amino-acid polypeptide reads, in one-letter code: Neuraminidase (470 aa).

Residues 1–6 are Intravirion-facing; the sequence is MNPNQK. A helical transmembrane segment spans residues 7–27; it reads IITIGSICMAIGIISLILQMG. The tract at residues 11–33 is involved in apical transport and lipid raft association; the sequence is GSICMAIGIISLILQMGNIISIW. Residues 28–470 are Virion surface-facing; it reads NIISIWVSHS…GAELPFTIDK (443 aa). The tract at residues 36–90 is hypervariable stalk region; sequence HSIQTGSQNHTGICNQRIITYENSTWVNQTYVNINNTNVVAGKDTTSVTLAGNSS. Asn-44, Asn-58, Asn-63, Asn-70, and Asn-88 each carry an N-linked (GlcNAc...) asparagine; by host glycan. A head of neuraminidase region spans residues 91 to 470; the sequence is LCPIRGWAIY…GAELPFTIDK (380 aa). Cystine bridges form between Cys-92-Cys-417, Cys-124-Cys-129, Cys-184-Cys-231, Cys-233-Cys-238, Cys-279-Cys-292, Cys-281-Cys-290, Cys-318-Cys-335, and Cys-421-Cys-447. Position 118 (Arg-118) interacts with substrate. Asn-146 carries an N-linked (GlcNAc...) asparagine; by host glycan. Residue Asp-151 is the Proton donor/acceptor of the active site. Arg-152 is a binding site for substrate. A glycan (N-linked (GlcNAc...) asparagine; by host) is linked at Asn-235. 277 to 278 serves as a coordination point for substrate; sequence EE. Substrate is bound at residue Arg-293. The Ca(2+) site is built by Asp-294, Gly-298, and Asp-324. Asn-365 is a glycosylation site (N-linked (GlcNAc...) asparagine; by host). Arg-368 contacts substrate. Tyr-402 (nucleophile) is an active-site residue. An N-linked (GlcNAc...) asparagine; by host glycan is attached at Asn-455.

It belongs to the glycosyl hydrolase 34 family. Homotetramer. It depends on Ca(2+) as a cofactor. In terms of processing, N-glycosylated.

It localises to the virion membrane. The protein localises to the host apical cell membrane. The catalysed reaction is Hydrolysis of alpha-(2-&gt;3)-, alpha-(2-&gt;6)-, alpha-(2-&gt;8)- glycosidic linkages of terminal sialic acid residues in oligosaccharides, glycoproteins, glycolipids, colominic acid and synthetic substrates.. With respect to regulation, inhibited by the neuraminidase inhibitors zanamivir (Relenza) and oseltamivir (Tamiflu). These drugs interfere with the release of progeny virus from infected cells and are effective against all influenza strains. Resistance to neuraminidase inhibitors is quite rare. In terms of biological role, catalyzes the removal of terminal sialic acid residues from viral and cellular glycoconjugates. Cleaves off the terminal sialic acids on the glycosylated HA during virus budding to facilitate virus release. Additionally helps virus spread through the circulation by further removing sialic acids from the cell surface. These cleavages prevent self-aggregation and ensure the efficient spread of the progeny virus from cell to cell. Otherwise, infection would be limited to one round of replication. Described as a receptor-destroying enzyme because it cleaves a terminal sialic acid from the cellular receptors. May facilitate viral invasion of the upper airways by cleaving the sialic acid moieties on the mucin of the airway epithelial cells. Likely to plays a role in the budding process through its association with lipid rafts during intracellular transport. May additionally display a raft-association independent effect on budding. Plays a role in the determination of host range restriction on replication and virulence. Sialidase activity in late endosome/lysosome traffic seems to enhance virus replication. The polypeptide is Neuraminidase (Aves (Human)).